We begin with the raw amino-acid sequence, 189 residues long: MVKMIVGLGNPGSKYQQTKHNVGFMAVDRLVKDLDISFTEDKTFKALVGSTFINQEKIYFVKPTTFMNNSGLVVRALLTYYNISTKDLMVIYDDLDMAVGKIRLRQKGSAGGHNGIKSIIAHIGTQEFDRVKIGIGRPSHGMSVINHVLGKFDTDDMITINIALDKVDKAINYYLQEKSIEKTMQQFNG.

Y15 lines the tRNA pocket. H20 acts as the Proton acceptor in catalysis. TRNA contacts are provided by F66, N68, and N114.

The protein belongs to the PTH family. As to quaternary structure, monomer.

Its subcellular location is the cytoplasm. The enzyme catalyses an N-acyl-L-alpha-aminoacyl-tRNA + H2O = an N-acyl-L-amino acid + a tRNA + H(+). Hydrolyzes ribosome-free peptidyl-tRNAs (with 1 or more amino acids incorporated), which drop off the ribosome during protein synthesis, or as a result of ribosome stalling. In terms of biological role, catalyzes the release of premature peptidyl moieties from peptidyl-tRNA molecules trapped in stalled 50S ribosomal subunits, and thus maintains levels of free tRNAs and 50S ribosomes. In Streptococcus equi subsp. zooepidemicus (strain H70), this protein is Peptidyl-tRNA hydrolase.